The primary structure comprises 2180 residues: Genome polyprotein (2180 aa).

4 disordered regions span residues 507-529 (DGAD…AKDP), 624-679 (QPQK…YPIQ), 703-809 (KRAK…NTLP), and 822-848 (SEVE…PPKM). Residues 573-624 (SKNQGLIRVLEQQLQDLNKRICPPGTSLFHFFDQQKSEMASLKEQIRLLKEQ) are a coiled coil. 2 stretches are compositionally biased toward polar residues: residues 631–643 (DTPS…QPFH) and 670–679 (PSLFSQYPIQ). Residues 703–716 (KRAKKKLQKDEVKQ) show a composition bias toward basic and acidic residues. Residues 759 to 771 (SEDTSSQSYISTE) are compositionally biased toward polar residues. Residues 784–807 (SEESTQLSQLSSSSNDSPENNENT) show a composition bias toward low complexity. The span at 822–832 (SEVEDEVDGMT) shows a compositional bias: acidic residues. The CCHC-type zinc finger occupies 1113 to 1126 (CFTCGKIGHFSRNC). Residue Asp-1227 is the For protease activity; shared with dimeric partner of the active site. Residues Asp-1480, Asp-1543, and Asp-1544 each contribute to the Mg(2+) site. Disordered regions lie at residues 1824-1848 (RRTR…YKLS), 2115-2145 (NIVK…KNKC), and 2161-2180 (YSTK…EPCI). A compositionally biased stretch (polar residues) spans 1828–1847 (SNSTKSKADSSQSTGSSYKL). Positions 2120 to 2145 (SPRKRKGKAKSKSSTRNEKRRAKNKC) are enriched in basic residues. The span at 2163–2180 (TKPSTPSWTQDSSSEPCI) shows a compositional bias: polar residues.

It belongs to the Petuviruses genome polyprotein family.

It catalyses the reaction DNA(n) + a 2'-deoxyribonucleoside 5'-triphosphate = DNA(n+1) + diphosphate. Its function is as follows. Encodes presumably for at least four polypeptides: Movement protein (MP), capsid protein (CP), Protease (PR), and reverse transcriptase (RT). This is Genome polyprotein from Petunia (PVCV).